Here is a 303-residue protein sequence, read N- to C-terminus: Methionyl-tRNA formyltransferase (303 aa).

Position 110 to 113 (110 to 113 (SLLP)) interacts with (6S)-5,6,7,8-tetrahydrofolate.

It belongs to the Fmt family.

The catalysed reaction is L-methionyl-tRNA(fMet) + (6R)-10-formyltetrahydrofolate = N-formyl-L-methionyl-tRNA(fMet) + (6S)-5,6,7,8-tetrahydrofolate + H(+). Functionally, attaches a formyl group to the free amino group of methionyl-tRNA(fMet). The formyl group appears to play a dual role in the initiator identity of N-formylmethionyl-tRNA by promoting its recognition by IF2 and preventing the misappropriation of this tRNA by the elongation apparatus. The protein is Methionyl-tRNA formyltransferase of Ehrlichia ruminantium (strain Gardel).